We begin with the raw amino-acid sequence, 388 residues long: Succinate--CoA ligase [ADP-forming] subunit beta (388 aa).

The ATP-grasp domain occupies 9–244 (KQLFARYGLP…PSQEDPREAQ (236 aa)). ATP is bound by residues K46, 53-55 (GRG), E99, T102, and E107. N199 and D213 together coordinate Mg(2+). Substrate contacts are provided by residues N264 and 321–323 (GIV).

It belongs to the succinate/malate CoA ligase beta subunit family. Heterotetramer of two alpha and two beta subunits. The cofactor is Mg(2+).

The catalysed reaction is succinate + ATP + CoA = succinyl-CoA + ADP + phosphate. It carries out the reaction GTP + succinate + CoA = succinyl-CoA + GDP + phosphate. It participates in carbohydrate metabolism; tricarboxylic acid cycle; succinate from succinyl-CoA (ligase route): step 1/1. In terms of biological role, succinyl-CoA synthetase functions in the citric acid cycle (TCA), coupling the hydrolysis of succinyl-CoA to the synthesis of either ATP or GTP and thus represents the only step of substrate-level phosphorylation in the TCA. The beta subunit provides nucleotide specificity of the enzyme and binds the substrate succinate, while the binding sites for coenzyme A and phosphate are found in the alpha subunit. In Photorhabdus laumondii subsp. laumondii (strain DSM 15139 / CIP 105565 / TT01) (Photorhabdus luminescens subsp. laumondii), this protein is Succinate--CoA ligase [ADP-forming] subunit beta.